Reading from the N-terminus, the 248-residue chain is PF03932 family protein CutC (248 aa).

Belongs to the CutC family. In terms of assembly, homodimer.

It is found in the cytoplasm. The polypeptide is PF03932 family protein CutC (Escherichia coli O9:H4 (strain HS)).